A 145-amino-acid polypeptide reads, in one-letter code: uncharacterized protein (145 aa).

The signal sequence occupies residues 1–26; sequence MAILLPLKSILPWCCITFSFLLSSSG.

This is an uncharacterized protein from Saccharomyces cerevisiae (strain ATCC 204508 / S288c) (Baker's yeast).